Consider the following 270-residue polypeptide: MPELPEVEVTRRGFAERIAGARIDAVRIGKPLRWALMVMPEALVGRRVLQVRRRGKYLLIDLDRGLLLLHLGMSGSLRFDAALPAPGVHDHFDLVTELGTLRLNDPRRFGAVVYVEDEAAPWAIKLLGGLGMEPLGDAFDLDAFHAGLRKRKAAVKQVLLAGDVVVGVGNIYASEALFLAGIRPTLSAARISRPRAARLHAAVREILARAVEKGGSTLRDFSNVEGQSGYFQLEATVYGRAGEPCRVCATPIRLLRQGQRSTYYCPNCQK.

Pro2 acts as the Schiff-base intermediate with DNA in catalysis. The Proton donor role is filled by Glu3. The active-site Proton donor; for beta-elimination activity is the Lys56. Residues His89, Arg107, and Arg151 each contribute to the DNA site. An FPG-type zinc finger spans residues 236 to 270 (TVYGRAGEPCRVCATPIRLLRQGQRSTYYCPNCQK). The active-site Proton donor; for delta-elimination activity is the Arg260.

Belongs to the FPG family. As to quaternary structure, monomer. Zn(2+) serves as cofactor.

It catalyses the reaction Hydrolysis of DNA containing ring-opened 7-methylguanine residues, releasing 2,6-diamino-4-hydroxy-5-(N-methyl)formamidopyrimidine.. It carries out the reaction 2'-deoxyribonucleotide-(2'-deoxyribose 5'-phosphate)-2'-deoxyribonucleotide-DNA = a 3'-end 2'-deoxyribonucleotide-(2,3-dehydro-2,3-deoxyribose 5'-phosphate)-DNA + a 5'-end 5'-phospho-2'-deoxyribonucleoside-DNA + H(+). Involved in base excision repair of DNA damaged by oxidation or by mutagenic agents. Acts as a DNA glycosylase that recognizes and removes damaged bases. Has a preference for oxidized purines, such as 7,8-dihydro-8-oxoguanine (8-oxoG). Has AP (apurinic/apyrimidinic) lyase activity and introduces nicks in the DNA strand. Cleaves the DNA backbone by beta-delta elimination to generate a single-strand break at the site of the removed base with both 3'- and 5'-phosphates. This Variovorax paradoxus (strain S110) protein is Formamidopyrimidine-DNA glycosylase.